Here is a 283-residue protein sequence, read N- to C-terminus: Polyamine aminopropyltransferase (283 aa).

One can recognise a PABS domain in the interval 5-241 (NNWYIEHFER…GWWSVTMARK (237 aa)). S-methyl-5'-thioadenosine is bound at residue Gln35. 2 residues coordinate spermidine: His66 and Asp90. S-methyl-5'-thioadenosine-binding positions include Asp110 and 141–142 (DG). Asp160 acts as the Proton acceptor in catalysis. 160-163 (DSTD) serves as a coordination point for spermidine. Pro167 provides a ligand contact to S-methyl-5'-thioadenosine.

It belongs to the spermidine/spermine synthase family. As to quaternary structure, homodimer or homotetramer.

It localises to the cytoplasm. It carries out the reaction S-adenosyl 3-(methylsulfanyl)propylamine + putrescine = S-methyl-5'-thioadenosine + spermidine + H(+). Its pathway is amine and polyamine biosynthesis; spermidine biosynthesis; spermidine from putrescine: step 1/1. Functionally, catalyzes the irreversible transfer of a propylamine group from the amino donor S-adenosylmethioninamine (decarboxy-AdoMet) to putrescine (1,4-diaminobutane) to yield spermidine. This chain is Polyamine aminopropyltransferase, found in Stenotrophomonas maltophilia (strain K279a).